We begin with the raw amino-acid sequence, 291 residues long: uncharacterized protein (291 aa).

Disordered regions lie at residues 29 to 50 (SEKPVGAPPASQIPGLSDLRDS) and 168 to 291 (RKVK…AELK). Phosphoserine is present on S50. Polar residues-rich tracts occupy residues 176–186 (NSKNPSKTGTP) and 205–217 (QKNSSPTNFSKLI). Positions 221-237 (YKDEWLQQQKAEADRRT) are enriched in basic and acidic residues. Positions 280-291 (SSPSESTPAELK) are enriched in polar residues.

This is an uncharacterized protein from Mus musculus (Mouse).